A 170-amino-acid polypeptide reads, in one-letter code: Centrin-2 (170 aa).

The disordered stretch occupies residues 1 to 21 (MQRGALRGASPTARRRLVDRP). 4 EF-hand domains span residues 26–61 (DEIE…LGFE), 62–97 (TKNP…KLGD), 99–134 (ESRE…LGET), and 135–170 (MSED…KTFP). Residues aspartate 39, aspartate 41, serine 43, methionine 45, and glutamate 50 each coordinate Ca(2+).

Belongs to the centrin family. As to quaternary structure, monomer. Does not homooligomerize.

The protein resides in the cytoplasm. Its subcellular location is the cytoskeleton. It is found in the microtubule organizing center. The protein localises to the centrosome. In tachyzoites, plays an essential role in microneme secretion that ensures parasite motility and attachment to, invasion of and egress from host cells. Also involved in the architecture of the peripheral annuli where it appears to regulate the localization of PAP2. In association with the myosin motor MyoJ, involved in the constriction of the basal complex at the end of daughter cell division in an actin-dependent manner; the basal complex is a cytoskeletal structure formed at the tachyzoite basal pole during daughter cell formation. May be involved in parasite replication. The chain is Centrin-2 from Toxoplasma gondii (strain ATCC 50611 / Me49).